A 202-amino-acid polypeptide reads, in one-letter code: Snake venom metalloproteinase TM-1 (202 aa).

Glutamine 1 is subject to Pyrrolidone carboxylic acid. Positions 7–202 (RYVMLAIVAD…TNPQCILNAP (196 aa)) constitute a Peptidase M12B domain. 3 disulfide bridges follow: cysteine 118–cysteine 197, cysteine 159–cysteine 181, and cysteine 161–cysteine 164. A Zn(2+)-binding site is contributed by histidine 143. Glutamate 144 is a catalytic residue. Positions 147 and 153 each coordinate Zn(2+).

The protein belongs to the venom metalloproteinase (M12B) family. P-I subfamily. As to quaternary structure, monomer. Zn(2+) serves as cofactor. In terms of processing, the N-terminus is blocked. Post-translationally, not glycosylated. In terms of tissue distribution, expressed by the venom gland.

The protein resides in the secreted. Inhibited by EDTA and 1,10-phenanthroline. Is also inhibited by endogenous tripeptide inhibitors pyroGlu-Asn-Trp, pyroGlu-Gln-Trp, and pyroGlu-Lys-Trp. Its function is as follows. Potent fibrinogenolytic protease which cleaves mainly the Aalpha (FGA) and Bbeta (FGB) chains of fibrinogen and slightly the gamma chain (FGG). Shows preference for substrates having a moderate-size and hydrophobic residue at the P1' position. Preferentially cleaves Ala-|-Leu and Tyr-|-Leu bonds. Is more susceptible to tripeptide inhibitors than TM-3 (AC O57413). The protein is Snake venom metalloproteinase TM-1 of Protobothrops mucrosquamatus (Taiwan habu).